The primary structure comprises 327 residues: Biotin synthase (327 aa).

Residues 51-278 (QTIQLSTLMS…KSYVRLSAGR (228 aa)) enclose the Radical SAM core domain. Residues C66, C70, and C73 each contribute to the [4Fe-4S] cluster site. [2Fe-2S] cluster is bound by residues C110, C141, C201, and R273.

Belongs to the radical SAM superfamily. Biotin synthase family. Homodimer. [4Fe-4S] cluster serves as cofactor. It depends on [2Fe-2S] cluster as a cofactor.

The enzyme catalyses (4R,5S)-dethiobiotin + (sulfur carrier)-SH + 2 reduced [2Fe-2S]-[ferredoxin] + 2 S-adenosyl-L-methionine = (sulfur carrier)-H + biotin + 2 5'-deoxyadenosine + 2 L-methionine + 2 oxidized [2Fe-2S]-[ferredoxin]. The protein operates within cofactor biosynthesis; biotin biosynthesis; biotin from 7,8-diaminononanoate: step 2/2. Catalyzes the conversion of dethiobiotin (DTB) to biotin by the insertion of a sulfur atom into dethiobiotin via a radical-based mechanism. This is Biotin synthase from Histophilus somni (strain 2336) (Haemophilus somnus).